The primary structure comprises 511 residues: Adenosine deaminase 2 (511 aa).

Residues 1-29 (MLVDGPSEWPALRFLLLAVAMSFFGSALS) form the signal peptide. The tract at residues 30-100 (IDETRAHLLL…HLIERSQVFN (71 aa)) is dimerization. Zn(2+) is bound by residues histidine 112 and histidine 114. Aspartate 115 is a binding site for substrate. Asparagine 127 carries an N-linked (GlcNAc...) asparagine glycan. The PRB domain stretch occupies residues 127–185 (NVTYRPHCHICFTPKGIMQFRFAHPTPRTSEKCSKWILLEDYRKRVQNVTEFDDSLLRN). A disulfide bond links cysteine 137 and cysteine 159. N-linked (GlcNAc...) asparagine glycosylation is found at asparagine 174 and asparagine 185. Substrate contacts are provided by residues 204 to 211 (WSKFETIF), histidine 293, and glycine 326. Histidine 356 provides a ligand contact to Zn(2+). The active-site Proton donor is the glutamate 359. The N-linked (GlcNAc...) asparagine glycan is linked to asparagine 378. Histidine 384 acts as the Proton acceptor in catalysis. Residue aspartate 441 coordinates Zn(2+). Aspartate 442 contributes to the substrate binding site.

Belongs to the metallo-dependent hydrolases superfamily. Adenosine and AMP deaminases family. ADGF subfamily. In terms of assembly, homodimer. Interacts with adenosine receptors. Binds heparin. It depends on Zn(2+) as a cofactor.

It localises to the secreted. It catalyses the reaction adenosine + H2O + H(+) = inosine + NH4(+). Functionally, adenosine deaminase that may contribute to the degradation of extracellular adenosine, a signaling molecule that controls a variety of cellular responses. Requires elevated adenosine levels for optimal enzyme activity. Binds to cell surfaces via proteoglycans and may play a role in the regulation of cell proliferation and differentiation, independently of its enzyme activity. This is Adenosine deaminase 2 from Pongo abelii (Sumatran orangutan).